The primary structure comprises 372 residues: Fatty acid 2-hydroxylase (372 aa).

Residues 8 to 86 (AASFSPSEVQ…LEQYYVGELR (79 aa)) enclose the Cytochrome b5 heme-binding domain. 2 residues coordinate heme: histidine 43 and histidine 69. 2 helical membrane-spanning segments follow: residues 168-188 (VWYS…WSYY) and 213-233 (SMFP…EYLI). One can recognise a Fatty acid hydroxylase domain in the interval 219–361 (FMLGIFLWSL…TKLWDYCFHT (143 aa)). Positions 234, 239, 257, 260, and 261 each coordinate Zn(2+). 2 helical membrane passes run 271–291 (VFPP…LQLI) and 292–312 (LPEA…VLYD). Residues histidine 315, histidine 319, histidine 336, histidine 339, and histidine 340 each contribute to the Zn(2+) site.

It belongs to the sterol desaturase family. SCS7 subfamily. Zn(2+) serves as cofactor.

Its subcellular location is the endoplasmic reticulum membrane. It is found in the microsome membrane. It catalyses the reaction a 1,2-saturated fatty acid + 2 Fe(II)-[cytochrome b5] + O2 + 2 H(+) = a (R)-2-hydroxy fatty acid + 2 Fe(III)-[cytochrome b5] + H2O. The catalysed reaction is hexadecanoate + 2 Fe(II)-[cytochrome b5] + O2 + 2 H(+) = (R)-2-hydroxyhexadecanoate + 2 Fe(III)-[cytochrome b5] + H2O. It carries out the reaction octadecanoate + 2 Fe(II)-[cytochrome b5] + O2 + 2 H(+) = (R)-2-hydroxyoctadecanoate + 2 Fe(III)-[cytochrome b5] + H2O. The enzyme catalyses docosanoate + 2 Fe(II)-[cytochrome b5] + O2 + 2 H(+) = 2-hydroxydocosanoate + 2 Fe(III)-[cytochrome b5] + H2O. It catalyses the reaction tetracosanoate + 2 Fe(II)-[cytochrome b5] + O2 + 2 H(+) = (R)-2-hydroxytetracosanoate + 2 Fe(III)-[cytochrome b5] + H2O. The protein operates within lipid metabolism; fatty acid metabolism. It participates in sphingolipid metabolism; galactosylceramide biosynthesis. Catalyzes the hydroxylation of free fatty acids at the C-2 position to produce 2-hydroxy fatty acids, which are building blocks of sphingolipids and glycosphingolipids common in neural tissue and epidermis. FA2H is stereospecific for the production of (R)-2-hydroxy fatty acids. Plays an essential role in the synthesis of galactosphingolipids of the myelin sheath. Responsible for the synthesis of sphingolipids and glycosphingolipids involved in the formation of epidermal lamellar bodies critical for skin permeability barrier. Participates in the synthesis of glycosphingolipids and a fraction of type II wax diesters in sebaceous gland, specifically regulating hair follicle homeostasis. Involved in the synthesis of sphingolipids of plasma membrane rafts, controlling lipid raft mobility and trafficking of raft-associated proteins. The polypeptide is Fatty acid 2-hydroxylase (FA2H) (Macaca fascicularis (Crab-eating macaque)).